The sequence spans 174 residues: uncharacterized protein (174 aa).

One can recognise an N-acetyltransferase domain in the interval 42–174 (SSNKNINLYE…GVKGMFWYPR (133 aa)).

The protein belongs to the acetyltransferase family. Ycf52 subfamily.

The protein resides in the plastid. It is found in the chloroplast. This is an uncharacterized protein from Pyropia yezoensis (Susabi-nori).